Consider the following 232-residue polypeptide: Ubiquinone biosynthesis O-methyltransferase (232 aa).

Residues Arg36, Gly55, Asp76, and Leu120 each contribute to the S-adenosyl-L-methionine site.

It belongs to the methyltransferase superfamily. UbiG/COQ3 family.

It carries out the reaction a 3-demethylubiquinol + S-adenosyl-L-methionine = a ubiquinol + S-adenosyl-L-homocysteine + H(+). The catalysed reaction is a 3-(all-trans-polyprenyl)benzene-1,2-diol + S-adenosyl-L-methionine = a 2-methoxy-6-(all-trans-polyprenyl)phenol + S-adenosyl-L-homocysteine + H(+). Its pathway is cofactor biosynthesis; ubiquinone biosynthesis. Its function is as follows. O-methyltransferase that catalyzes the 2 O-methylation steps in the ubiquinone biosynthetic pathway. The chain is Ubiquinone biosynthesis O-methyltransferase from Pseudomonas fluorescens (strain ATCC BAA-477 / NRRL B-23932 / Pf-5).